The chain runs to 239 residues: Serine protease SplC (239 aa).

A signal peptide spans Met-1–Ala-36. Catalysis depends on charge relay system residues His-75, Asp-113, and Ser-193.

Belongs to the peptidase S1B family.

The protein resides in the secreted. This Staphylococcus aureus protein is Serine protease SplC (splC).